A 471-amino-acid polypeptide reads, in one-letter code: Argininosuccinate lyase (471 aa).

The protein belongs to the lyase 1 family. Argininosuccinate lyase subfamily.

The protein resides in the cytoplasm. The enzyme catalyses 2-(N(omega)-L-arginino)succinate = fumarate + L-arginine. The protein operates within amino-acid biosynthesis; L-arginine biosynthesis; L-arginine from L-ornithine and carbamoyl phosphate: step 3/3. The polypeptide is Argininosuccinate lyase (Acidiphilium cryptum (strain JF-5)).